Reading from the N-terminus, the 321-residue chain is Quinol oxidase subunit 2 (321 aa).

Positions Met1–Gly25 are cleaved as a signal peptide. Cys26 is lipidated: N-palmitoyl cysteine. The S-diacylglycerol cysteine moiety is linked to residue Cys26. The next 2 helical transmembrane spans lie at Ser49–Val69 and Thr90–Pro110. The tract at residues Gln294–Glu321 is disordered. Basic and acidic residues predominate over residues Ser300 to Glu321.

Belongs to the cytochrome c oxidase subunit 2 family. In terms of assembly, interacts with FloT.

It localises to the cell membrane. The protein resides in the membrane raft. It carries out the reaction 2 a quinol + O2 = 2 a quinone + 2 H2O. In terms of biological role, catalyzes quinol oxidation with the concomitant reduction of oxygen to water. Major component for energy conversion during vegetative growth. Subunit II transfers the electrons from a quinol to the binuclear center of the catalytic subunit I. This chain is Quinol oxidase subunit 2 (qoxA), found in Bacillus subtilis (strain 168).